Here is a 342-residue protein sequence, read N- to C-terminus: Ribosomal RNA small subunit methyltransferase H (342 aa).

S-adenosyl-L-methionine contacts are provided by residues 36–38 (GGH), D56, F82, D100, and Q107. The interval 311 to 342 (GESGMGKGNSAAASRFPTADSPFPASANGDAA) is disordered.

It belongs to the methyltransferase superfamily. RsmH family.

The protein localises to the cytoplasm. It catalyses the reaction cytidine(1402) in 16S rRNA + S-adenosyl-L-methionine = N(4)-methylcytidine(1402) in 16S rRNA + S-adenosyl-L-homocysteine + H(+). Functionally, specifically methylates the N4 position of cytidine in position 1402 (C1402) of 16S rRNA. The polypeptide is Ribosomal RNA small subunit methyltransferase H (Xanthomonas axonopodis pv. citri (strain 306)).